Here is a 316-residue protein sequence, read N- to C-terminus: Acetyl-coenzyme A carboxylase carboxyl transferase subunit alpha (316 aa).

Residues L40–E293 enclose the CoA carboxyltransferase C-terminal domain.

This sequence belongs to the AccA family. As to quaternary structure, acetyl-CoA carboxylase is a heterohexamer composed of biotin carboxyl carrier protein (AccB), biotin carboxylase (AccC) and two subunits each of ACCase subunit alpha (AccA) and ACCase subunit beta (AccD).

The protein localises to the cytoplasm. The catalysed reaction is N(6)-carboxybiotinyl-L-lysyl-[protein] + acetyl-CoA = N(6)-biotinyl-L-lysyl-[protein] + malonyl-CoA. It participates in lipid metabolism; malonyl-CoA biosynthesis; malonyl-CoA from acetyl-CoA: step 1/1. Its function is as follows. Component of the acetyl coenzyme A carboxylase (ACC) complex. First, biotin carboxylase catalyzes the carboxylation of biotin on its carrier protein (BCCP) and then the CO(2) group is transferred by the carboxyltransferase to acetyl-CoA to form malonyl-CoA. The protein is Acetyl-coenzyme A carboxylase carboxyl transferase subunit alpha of Chelativorans sp. (strain BNC1).